The sequence spans 253 residues: MNAIDLNSDVGESYGAYTIGNDEKIMPYISSANIACGFHAGDAHVMRETVARALEHSVAIGAHPGLPDIGGFGRRNIDISPQEGYELVVYQIGALWAIAKAQGGKLHHVKPHGALYNMAAADQALAEAIANAVYDVDPNLVFYGLAGSALIAAGKKAGLKTASEVFADRTYQADGSLTSRRAPNALITDAKEASAQVLRMIQEGKVRTQQGTDVKIDAQTVCIHGDGAQAVAFAEQLKGELERHGITVKAGNC.

This sequence belongs to the LamB/PxpA family. Forms a complex composed of PxpA, PxpB and PxpC.

The catalysed reaction is 5-oxo-L-proline + ATP + 2 H2O = L-glutamate + ADP + phosphate + H(+). Functionally, catalyzes the cleavage of 5-oxoproline to form L-glutamate coupled to the hydrolysis of ATP to ADP and inorganic phosphate. In Shouchella clausii (strain KSM-K16) (Alkalihalobacillus clausii), this protein is 5-oxoprolinase subunit A.